The sequence spans 519 residues: Aldehyde dehydrogenase, mitochondrial (519 aa).

A mitochondrion-targeting transit peptide spans 1–19 (MLRAALSTARRGPRLSRLL). Residues 12–26 (GPRLSRLLSAAATSA) carry the SIFI-degron motif. N6-acetyllysine occurs at positions 54, 75, 80, and 161. 264 to 269 (GSTEVG) lines the NAD(+) pocket. E287 acts as the Proton acceptor in catalysis. C321 acts as the Nucleophile in catalysis. K370, K377, K385, K409, K428, K430, K443, and K453 each carry N6-acetyllysine.

The protein belongs to the aldehyde dehydrogenase family. In terms of assembly, homotetramer. In response to mitochondrial stress, the precursor protein is ubiquitinated by the SIFI complex in the cytoplasm before mitochondrial import, leading to its degradation. Within the SIFI complex, UBR4 initiates ubiquitin chain that are further elongated or branched by KCMF1.

It is found in the mitochondrion matrix. It carries out the reaction an aldehyde + NAD(+) + H2O = a carboxylate + NADH + 2 H(+). It functions in the pathway alcohol metabolism; ethanol degradation; acetate from ethanol: step 2/2. Functionally, required for clearance of cellular formaldehyde, a cytotoxic and carcinogenic metabolite that induces DNA damage. The sequence is that of Aldehyde dehydrogenase, mitochondrial (Aldh2) from Rattus norvegicus (Rat).